Here is a 446-residue protein sequence, read N- to C-terminus: Glutamate--tRNA ligase (446 aa).

Residues 9–19 (PSPTGLLHVGN) carry the 'HIGH' region motif. A 'KMSKS' region motif is present at residues 240-244 (GLSKR). K243 provides a ligand contact to ATP.

It belongs to the class-I aminoacyl-tRNA synthetase family. Glutamate--tRNA ligase type 1 subfamily. In terms of assembly, monomer.

It localises to the cytoplasm. It carries out the reaction tRNA(Glu) + L-glutamate + ATP = L-glutamyl-tRNA(Glu) + AMP + diphosphate. In terms of biological role, catalyzes the attachment of glutamate to tRNA(Glu) in a two-step reaction: glutamate is first activated by ATP to form Glu-AMP and then transferred to the acceptor end of tRNA(Glu). This chain is Glutamate--tRNA ligase, found in Azospirillum brasilense.